The primary structure comprises 282 residues: ATP synthase gamma chain (282 aa).

This sequence belongs to the ATPase gamma chain family. As to quaternary structure, F-type ATPases have 2 components, CF(1) - the catalytic core - and CF(0) - the membrane proton channel. CF(1) has five subunits: alpha(3), beta(3), gamma(1), delta(1), epsilon(1). CF(0) has three main subunits: a, b and c.

The protein localises to the cell membrane. Its function is as follows. Produces ATP from ADP in the presence of a proton gradient across the membrane. The gamma chain is believed to be important in regulating ATPase activity and the flow of protons through the CF(0) complex. This chain is ATP synthase gamma chain, found in Clostridium botulinum (strain Langeland / NCTC 10281 / Type F).